The following is a 61-amino-acid chain: MAKKALVNKAARKPKFAVRGYTRCSKCGRPRAVFRKFGLCRICLREMAHAGELPGVQKSSW.

Positions 24, 27, 40, and 43 each coordinate Zn(2+).

Belongs to the universal ribosomal protein uS14 family. Zinc-binding uS14 subfamily. In terms of assembly, part of the 30S ribosomal subunit. Contacts proteins S3 and S10. It depends on Zn(2+) as a cofactor.

In terms of biological role, binds 16S rRNA, required for the assembly of 30S particles and may also be responsible for determining the conformation of the 16S rRNA at the A site. This chain is Small ribosomal subunit protein uS14B, found in Mycobacterium ulcerans (strain Agy99).